A 201-amino-acid chain; its full sequence is Recombination protein RecR (201 aa).

The C4-type zinc-finger motif lies at 59–74; that stretch reads CKICGNIDTENICRIC. Residues 82 to 177 enclose the Toprim domain; the sequence is SIIAIVETVA…KISRLASGIP (96 aa).

The protein belongs to the RecR family.

May play a role in DNA repair. It seems to be involved in an RecBC-independent recombinational process of DNA repair. It may act with RecF and RecO. The protein is Recombination protein RecR of Rickettsia massiliae (strain Mtu5).